We begin with the raw amino-acid sequence, 260 residues long: Aliphatic sulfonates import ATP-binding protein SsuB 1 (260 aa).

An ABC transporter domain is found at 29-243 (VRVDGLTRSF…DITDPRFAEL (215 aa)). ATP is bound at residue 61–68 (GRSGCGKS).

It belongs to the ABC transporter superfamily. Aliphatic sulfonates importer (TC 3.A.1.17.2) family. In terms of assembly, the complex is composed of two ATP-binding proteins (SsuB), two transmembrane proteins (SsuC) and a solute-binding protein (SsuA).

The protein localises to the cell membrane. The catalysed reaction is ATP + H2O + aliphatic sulfonate-[sulfonate-binding protein]Side 1 = ADP + phosphate + aliphatic sulfonateSide 2 + [sulfonate-binding protein]Side 1.. Its function is as follows. Part of the ABC transporter complex SsuABC involved in aliphatic sulfonates import. Responsible for energy coupling to the transport system. The polypeptide is Aliphatic sulfonates import ATP-binding protein SsuB 1 (Streptomyces avermitilis (strain ATCC 31267 / DSM 46492 / JCM 5070 / NBRC 14893 / NCIMB 12804 / NRRL 8165 / MA-4680)).